A 55-amino-acid chain; its full sequence is UPF0391 membrane protein Meso_3110 (55 aa).

The next 2 helical transmembrane spans lie at tryptophan 4–alanine 24 and isoleucine 30–leucine 50.

It belongs to the UPF0391 family.

The protein localises to the cell membrane. The protein is UPF0391 membrane protein Meso_3110 of Chelativorans sp. (strain BNC1).